Reading from the N-terminus, the 887-residue chain is Phosphatidylinositol 3-kinase catalytic subunit type 3 (887 aa).

Positions Tyr35–Gln184 constitute a C2 PI3K-type domain. Residues Val149 to Asp170 are disordered. Positions Pro156–Asp170 are enriched in polar residues. Thr163 bears the Phosphothreonine; by AMPK mark. Ser165 carries the phosphoserine; by AMPK modification. 3 positions are modified to phosphoserine: Ser244, Ser261, and Ser282. The PIK helical domain maps to Asp283 to Val520. Residues Thr447–Asp467 are disordered. The region spanning Ile605–Phe871 is the PI3K/PI4K catalytic domain. Residues Leu611–Met617 form a G-loop region. The catalytic loop stretch occupies residues Gly740 to Asn748. Residues His759 to Asn780 form an activation loop region.

It belongs to the PI3/PI4-kinase family. Component of the PI3K (PI3KC3/PI3K-III/class III phosphatidylinositol 3-kinase) complex the core of which is composed of the catalytic subunit PIK3C3, the regulatory subunit PIK3R4 and BECN1 associating with additional regulatory/auxiliary subunits to form alternative complex forms. Alternative complex forms containing a fourth regulatory subunit in a mutually exclusive manner are: the PI3K complex I (PI3KC3-C1) containing ATG14, and the PI3K complex II (PI3KC3-C2) containing UVRAG. PI3KC3-C1 displays a V-shaped architecture with PIK3R4 serving as a bridge between PIK3C3 and the ATG14:BECN1 subcomplex. Both, PI3KC3-C1 and PI3KC3-C2, can associate with further regulatory subunits such as RUBCN, SH3GLB1/Bif-1 and AMBRA1. PI3KC3-C1 probably associates with PIK3CB. Interacts with RAB7A in the presence of PIK3R4. Interacts with AMBRA1. Interacts with BECN1P1/BECN2. Interacts with SLAMF1. May be a component of a complex composed of RAB5A (in GDP-bound form), DYN2 and PIK3C3. Interacts with NCKAP1L. Interacts with ATG14; this interaction is increased in the absence of TMEM39A. Interacts with STEEP1; the interaction is STING1-dependent and required for trafficking of STING1 from the endoplasmic reticulum. Interacts with YWHAG. Interacts with ARMC3. The cofactor is Mn(2+). Ubiquitinated via 'Lys-29'- and 'Lys-48'-linked ubiquitination by UBE3C, promoting its degradation. Deubiquitination by ZRANB1/TRABID promotes its stabilization, leading to autophagosome maturation. Ubiquitously expressed, with a highest expression in skeletal muscle.

Its subcellular location is the midbody. It is found in the late endosome. The protein resides in the cytoplasmic vesicle. The protein localises to the autophagosome. It carries out the reaction a 1,2-diacyl-sn-glycero-3-phospho-(1D-myo-inositol) + ATP = a 1,2-diacyl-sn-glycero-3-phospho-(1D-myo-inositol-3-phosphate) + ADP + H(+). Its function is as follows. Catalytic subunit of the PI3K complex that mediates formation of phosphatidylinositol 3-phosphate; different complex forms are believed to play a role in multiple membrane trafficking pathways: PI3KC3-C1 is involved in initiation of autophagosomes and PI3KC3-C2 in maturation of autophagosomes and endocytosis. As part of PI3KC3-C1, promotes endoplasmic reticulum membrane curvature formation prior to vesicle budding. Involved in regulation of degradative endocytic trafficking and required for the abscission step in cytokinesis, probably in the context of PI3KC3-C2. Involved in the transport of lysosomal enzyme precursors to lysosomes. Required for transport from early to late endosomes. (Microbial infection) Kinase activity is required for SARS coronavirus-2/SARS-CoV-2 replication. In Homo sapiens (Human), this protein is Phosphatidylinositol 3-kinase catalytic subunit type 3.